The following is a 757-amino-acid chain: RNA-directed RNA polymerase catalytic subunit (757 aa).

Residues 52–78 (RGKWTTNTETGAPQLNPIDGPLPEDNE) are disordered. Residues 55–64 (WTTNTETGAP) show a composition bias toward polar residues. 2 consecutive short sequence motifs (nuclear localization signal) follow at residues 187 to 195 (RKRRVRDNM) and 203 to 216 (RTIG…NKRS). The segment at 249 to 256 (RGFVYFVE) is promoter-binding site. One can recognise a RdRp catalytic domain in the interval 286-483 (VRKMMTNSQD…GINMSKKKSY (198 aa)).

It belongs to the influenza viruses polymerase PB1 family. As to quaternary structure, influenza RNA polymerase is composed of three subunits: PB1, PB2 and PA. Interacts (via N-terminus) with PA (via C-terminus). Interacts (via C-terminus) with PB2 (via N-terminus); this interaction is essential for transcription initiation. Interacts (via C-terminus) with human PKP2 (via N-terminus); the interaction competitively inhibits the interaction between the RNA polymerase subunits PB1 and PB2. Post-translationally, phosphorylated by host PRKCA.

The protein resides in the host nucleus. Its subcellular location is the host cytoplasm. It catalyses the reaction RNA(n) + a ribonucleoside 5'-triphosphate = RNA(n+1) + diphosphate. In terms of biological role, RNA-dependent RNA polymerase which is responsible for replication and transcription of virus RNA segments. The transcription of viral mRNAs occurs by a unique mechanism called cap-snatching. 5' methylated caps of cellular mRNAs are cleaved after 10-13 nucleotides by PA. In turn, these short capped RNAs are used as primers by PB1 for transcription of viral mRNAs. During virus replication, PB1 initiates RNA synthesis and copy vRNA into complementary RNA (cRNA) which in turn serves as a template for the production of more vRNAs. The sequence is that of RNA-directed RNA polymerase catalytic subunit from Influenza A virus (strain A/Swine/Tennessee/26/1977 H1N1).